We begin with the raw amino-acid sequence, 349 residues long: MQLSFRWYGDSDPVTLKQIKQIPDMKHIVSAIYDVPVGDVWTKDKINALKSSIEQEGLTLSVMESLPVHESIKLGEANRDNLIENYKKSLRNLGESGIKTVCYNFMPVFDWTRSNLDYELEDGSKTLMYDNDFVKDIDPVTTNLNLPGWDESYTKEEMATLIEKYRQFDEEDLWKNLEYFLNAVLPIAIEHDIDLTIHPDDPPWSIFGIPRIIKTKESYQRLIAINSSKNNGICFCTGSLGCLEENDLPEIIKEFGDHIHFVHMRNIKRLDNHSFVESGHLSKYGSVDMKAVVRALKDINYKGTIRPDHGRMIWGETGKAGYGLFDRALGATYINGLIEGVETNDTTIS.

This sequence belongs to the mannonate dehydratase family. Fe(2+) is required as a cofactor. Requires Mn(2+) as cofactor.

The enzyme catalyses D-mannonate = 2-dehydro-3-deoxy-D-gluconate + H2O. It functions in the pathway carbohydrate metabolism; pentose and glucuronate interconversion. In terms of biological role, catalyzes the dehydration of D-mannonate. The protein is Mannonate dehydratase of Oceanobacillus iheyensis (strain DSM 14371 / CIP 107618 / JCM 11309 / KCTC 3954 / HTE831).